The chain runs to 647 residues: Neuronal PAS domain-containing protein 4-like (647 aa).

Positions 16–29 are basic motif; degenerate; it reads KRFRSTKGASKARR. The bHLH domain occupies 16 to 67; sequence KRFRSTKGASKARRDQMNSEIRNLRALLPISPEHRLSYLHSMSITCTYIRKS. The tract at residues 30-67 is helix-loop-helix motif; sequence DQMNSEIRNLRALLPISPEHRLSYLHSMSITCTYIRKS. PAS domains are found at residues 117-181 and 238-274; these read VLQA…SPSG and SADM…HPDD.

As to quaternary structure, heterodimer; efficient DNA binding requires dimerization with another bHLH protein. In terms of tissue distribution, specifically expressed in endothelial and hematopoietic precursor cells.

It is found in the nucleus. In terms of biological role, transcription factor specifically expressed in endothelial and hematopoietic precursor cells that acts as a key regulator of the endothelial differentiation cascade. Acts as an early-response transcription factor that regulates the expression of early regulators of endothelial and haematopoietic differentiation, such as etv2 and tal1. The sequence is that of Neuronal PAS domain-containing protein 4-like from Danio rerio (Zebrafish).